The following is a 394-amino-acid chain: Aromatic-amino-acid aminotransferase (394 aa).

Residues G34, Y65, W127, and N180 each coordinate substrate. Residue K243 is modified to N6-(pyridoxal phosphate)lysine. R371 contacts substrate.

This sequence belongs to the class-I pyridoxal-phosphate-dependent aminotransferase family. In terms of assembly, homodimer. Pyridoxal 5'-phosphate is required as a cofactor.

Its subcellular location is the cytoplasm. It catalyses the reaction an aromatic L-alpha-amino acid + 2-oxoglutarate = an aromatic oxo-acid + L-glutamate. Functionally, shows activities toward both dicarboxylic and aromatic substrates. The sequence is that of Aromatic-amino-acid aminotransferase (tyrB) from Paracoccus denitrificans.